A 194-amino-acid chain; its full sequence is FAD-linked sulfhydryl oxidase ERV1 (194 aa).

Positions 44 to 72 (LSLSLSPPPTPPSPPPPPPEVLKKDSKAA) are disordered. Pro residues predominate over residues 49–63 (SPPPTPPSPPPPPPE). The ERV/ALR sulfhydryl oxidase domain maps to 72-172 (APLTKEEVGR…FPCQRVNARW (101 aa)). Positions 76, 81, 84, 121, 125, 148, 151, 152, 155, 160, and 171 each coordinate FAD. C119 and C122 are disulfide-bonded. A disulfide bond links C148 and C165. C177 and C182 are disulfide-bonded. Positions 177 to 182 (CPERSC) match the Required for dimerization and substrate specificity motif.

In terms of assembly, homodimer. The cofactor is FAD. Post-translationally, contains three disulfide bonds; one catalytic disulfide (Cys-119 to Cys-122), one structural disulfide (Cys-148 to Cys-165), and one shuttle disulfide (Cys-177 to Cys-182).

The protein resides in the mitochondrion. The enzyme catalyses 2 R'C(R)SH + O2 = R'C(R)S-S(R)CR' + H2O2. Its function is as follows. FAD-dependent sulfhydryl oxidase that catalyzes disulfide bond formation. Oxidizes thioredoxin in vitro. Required for the import and folding of small cysteine-containing proteins in the mitochondrial intermembrane space, and can act independently of the oxidoreductase MIA40. Can oxidize the cytochrome c oxidase assembly protein COX19, a typical substrate of MIA40. This Oryza sativa subsp. japonica (Rice) protein is FAD-linked sulfhydryl oxidase ERV1.